The following is a 141-amino-acid chain: Large ribosomal subunit protein uL11 (141 aa).

The protein belongs to the universal ribosomal protein uL11 family. As to quaternary structure, part of the ribosomal stalk of the 50S ribosomal subunit. Interacts with L10 and the large rRNA to form the base of the stalk. L10 forms an elongated spine to which L12 dimers bind in a sequential fashion forming a multimeric L10(L12)X complex. In terms of processing, one or more lysine residues are methylated.

Its function is as follows. Forms part of the ribosomal stalk which helps the ribosome interact with GTP-bound translation factors. In Campylobacter concisus (strain 13826), this protein is Large ribosomal subunit protein uL11.